A 349-amino-acid chain; its full sequence is 5-deoxyribose 1-phosphate isomerase (349 aa).

Residues 49 to 51 (RGA), Arg-92, and Gln-199 each bind substrate. The Proton donor role is filled by Asp-240. Position 250–251 (250–251 (NK)) interacts with substrate.

It belongs to the EIF-2B alpha/beta/delta subunits family. DrdI subfamily.

It catalyses the reaction 5-deoxy-alpha-D-ribose 1-phosphate = 5-deoxy-D-ribulose 1-phosphate. The protein operates within carbohydrate degradation. In terms of biological role, catalyzes the isomerization of 5-deoxy-alpha-D-ribose 1-phosphate to 5-deoxy-D-ribulose 1-phosphate, as part of a 5-deoxyribose salvage pathway that recycles this toxic radical SAM enzyme by-product to mainstream metabolites. The protein is 5-deoxyribose 1-phosphate isomerase of Clostridium botulinum (strain ATCC 19397 / Type A).